The chain runs to 770 residues: Proprotein convertase subtilisin/kexin type 7 (770 aa).

The N-terminal stretch at 1–36 (MPKGRQKVPHLDAHLGLPICLWLELAIFFLVPQVMG) is a signal peptide. The propeptide occupies 37–140 (LSEAGGLDIL…EQTLLKRAKR (104 aa)). Topologically, residues 141-666 (SIHFNDPKYP…YTITPNTLKT (526 aa)) are extracellular. The Peptidase S8 domain occupies 152–472 (QWHLNNRRSP…FGLLNAWRLV (321 aa)). 2 N-linked (GlcNAc...) asparagine glycosylation sites follow: asparagine 166 and asparagine 174. Aspartate 186 functions as the Charge relay system in the catalytic mechanism. Positions 195-228 (DIAPNYSPEGSYDLNSNDPDPMPHPDEENGNHHG) are disordered. Residues 215 to 225 (PMPHPDEENGN) are compositionally biased toward basic and acidic residues. The active-site Charge relay system is the histidine 227. N-linked (GlcNAc...) asparagine glycosylation is present at asparagine 240. The Charge relay system role is filled by serine 405. Residues 480-617 (SVPYLASYVS…QLTLYGSMWS (138 aa)) enclose the P/Homo B domain. A glycan (N-linked (GlcNAc...) asparagine) is linked at asparagine 510. A helical membrane pass occupies residues 667-687 (LVLVGCFSVFWTIYYMLEVCL). At 688 to 770 (SQRNKASTHG…LLQGKSGQIC (83 aa)) the chain is on the cytoplasmic side.

It belongs to the peptidase S8 family. Requires Ca(2+) as cofactor. Widely expressed. Expressed in brain, lung, muscle, heart, liver, kidney, spleen and thymus.

Its subcellular location is the golgi apparatus. It localises to the trans-Golgi network membrane. With respect to regulation, inhibited by zinc and copper. Its function is as follows. Serine endoprotease that processes various proproteins by cleavage at paired basic amino acids, recognizing the RXXX[KR]R consensus motif. Likely functions in the constitutive secretory pathway. The polypeptide is Proprotein convertase subtilisin/kexin type 7 (Pcsk7) (Mus musculus (Mouse)).